The primary structure comprises 132 residues: Small ribosomal subunit protein uS8 (132 aa).

The protein belongs to the universal ribosomal protein uS8 family. As to quaternary structure, part of the 30S ribosomal subunit. Contacts proteins S5 and S12.

One of the primary rRNA binding proteins, it binds directly to 16S rRNA central domain where it helps coordinate assembly of the platform of the 30S subunit. The protein is Small ribosomal subunit protein uS8 of Mycobacterium bovis (strain ATCC BAA-935 / AF2122/97).